The chain runs to 374 residues: Translocating chain-associated membrane protein 1 (374 aa).

Over 1-29 (MAIRKKSNKNPPLLSHEFLLQNHADIVSC) the chain is Cytoplasmic. A helical membrane pass occupies residues 30-50 (LAMLFLLGLMFEVTAKGAIIF). At 51-76 (VALQYNVTRPATEEQATESASLYHYG) the chain is on the lumenal side. Residue asparagine 56 is glycosylated (N-linked (GlcNAc...) asparagine). The helical transmembrane segment at 77–97 (IKDLATVLFYMLVAIIIHAII) threads the bilayer. At 98–121 (QEYVLDKINRRMHFSKTKHSKFNE) the chain is on the cytoplasmic side. The TLC domain occupies 117-326 (SKFNESGQLS…NFQLRRWREH (210 aa)). A helical membrane pass occupies residues 122–142 (SGQLSAFYLFACVWGTFILIS). Residues 143-159 (ENYISDPTILWRAYPHN) are Lumenal-facing. The chain crosses the membrane as a helical span at residues 160–180 (LMTFQTKFFYISQLAYWLHAF). Residues 181 to 192 (PELYFQKTKKED) are Cytoplasmic-facing. Residues 193 to 213 (IPRQLVYIGLYLFHIAGAYLL) traverse the membrane as a helical segment. Residues 214-217 (NLNH) are Lumenal-facing. The helical transmembrane segment at 218-238 (LGLVLLVLHYFVEFLFHISRL) threads the bilayer. Over 239-251 (FYFSDEKYQKGFS) the chain is Cytoplasmic. Residues 252–272 (LWAVLFVLGRLLTLILSVLTV) form a helical membrane-spanning segment. At 273–297 (GFGLARAENQKLDFSTGNFNVLAVR) the chain is on the lumenal side. A helical transmembrane segment spans residues 298–318 (IAVLASICITQAFMMWKFINF). Topologically, residues 319 to 374 (QLRRWREHSAFQAPPVKRKPAVTKGRSSRKGTENGVNGTVTSNGADSPRNRKEKSS) are cytoplasmic. The disordered stretch occupies residues 333–374 (PVKRKPAVTKGRSSRKGTENGVNGTVTSNGADSPRNRKEKSS). Positions 334 to 347 (VKRKPAVTKGRSSR) are enriched in basic residues. Residues 352-363 (NGVNGTVTSNGA) are compositionally biased toward polar residues. Serine 365 carries the phosphoserine modification.

This sequence belongs to the TRAM family. In terms of assembly, interacts with SEC61B. May interact with Derlin-1/DERL1. N-glycosylated.

It is found in the endoplasmic reticulum membrane. Its function is as follows. Involved in the translocation of nascent protein chains into or through the endoplasmic reticulum (ER) membrane by facilitating the proper chain positioning at the SEC61 channel. Regulates the exposure of nascent secretory protein chain to the cytosol during translocation into the ER. May affect the phospholipid bilayer in the vicinity of the lateral gate of the SEC61 channel, thereby facilitating ER protein transport. Intimately associates with transmembrane (TM) domain of nascent membrane proteins during the entire integration process into the ER membrane. Associates with the second TM domain of G-protein-coupled receptor opsin/OPSD nascent chain in the ER membrane, which may facilitate its integration into the membrane. Under conditions of ER stress, participates in the disposal of misfolded ER membrane proteins during the unfolded protein response (UPR), an integrated stress response (ISR) pathway, by selectively retrotranslocating misfolded ER-membrane proteins from the ER into the cytosol where they are ubiquitinated and degraded by the proteasome. In Mus musculus (Mouse), this protein is Translocating chain-associated membrane protein 1.